The sequence spans 352 residues: Protein NDRG4 (352 aa).

A phosphoserine mark is found at serine 298, serine 317, and serine 323. The interval 301-352 is disordered; that stretch reads AVPSASMTRLARSRTASLTSASSVDGSRPQPCTHSDSSEGMGQVNHTMEVSC. The segment covering 308–323 has biased composition (low complexity); that stretch reads TRLARSRTASLTSASS. Polar residues predominate over residues 330-352; the sequence is QPCTHSDSSEGMGQVNHTMEVSC.

The protein belongs to the NDRG family. Expressed in the brain and heart, weakly in the kidney; most prominently in postnatal brain where it is expressed widely in the olfactory bulb, cerebral cortex, hippocampus, cerebellum, thalamus, and medulla oblongata.

The protein localises to the cytoplasm. Its subcellular location is the cytosol. Contributes to the maintenance of intracerebral BDNF levels within the normal range, which is necessary for the preservation of spatial learning and the resistance to neuronal cell death caused by ischemic stress. May enhance growth factor-induced ERK1 and ERK2 phosphorylation, including that induced by NGF. May attenuate NGF-promoted ELK1 phosphorylation in a microtubule-dependent manner. The chain is Protein NDRG4 (Ndrg4) from Rattus norvegicus (Rat).